The primary structure comprises 198 residues: MAEKQTAKRNRREEILQSLAQMLESSDGSQRITTAKLAASVGVSEAALYRHFPSKTRMFDSLIEFIEDSLITRINLILKDEKETLNRLRLIVLLILGFGERNPGLTRILTGHALMFEQDRLQGRINQLFERIEAQLRQVLREKKMREGEGYATDEALLASQLLAFCEGMLSRFVRSEFRYSPTADFEARWPLLAAQLQ.

In terms of domain architecture, HTH tetR-type spans 9-70; it reads RNRREEILQS…SLIEFIEDSL (62 aa). The H-T-H motif DNA-binding region spans 33 to 52; that stretch reads TTAKLAASVGVSEAALYRHF. Residues 117 to 145 adopt a coiled-coil conformation; that stretch reads EQDRLQGRINQLFERIEAQLRQVLREKKM.

This sequence belongs to the nucleoid occlusion factor SlmA family. In terms of assembly, homodimer. Interacts with FtsZ.

It is found in the cytoplasm. The protein resides in the nucleoid. Its function is as follows. Required for nucleoid occlusion (NO) phenomenon, which prevents Z-ring formation and cell division over the nucleoid. Acts as a DNA-associated cell division inhibitor that binds simultaneously chromosomal DNA and FtsZ, and disrupts the assembly of FtsZ polymers. SlmA-DNA-binding sequences (SBS) are dispersed on non-Ter regions of the chromosome, preventing FtsZ polymerization at these regions. The polypeptide is Nucleoid occlusion factor SlmA (Cronobacter sakazakii (strain ATCC BAA-894) (Enterobacter sakazakii)).